We begin with the raw amino-acid sequence, 1331 residues long: Xanthine dehydrogenase/oxidase (1331 aa).

A 2Fe-2S ferredoxin-type domain is found at 4 to 91; that stretch reads DELVFFVNGK…HVAVTTVEGI (88 aa). [2Fe-2S] cluster-binding residues include Cys-43, Cys-48, Cys-51, Cys-73, Cys-113, Cys-116, Cys-148, and Cys-150. The 184-residue stretch at 229 to 412 folds into the FAD-binding PCMH-type domain; the sequence is FEGERVTWIQ…LSIEIPYSRE (184 aa). Residues 257–264, Phe-335, 345–349, Asp-358, Leu-402, and Lys-420 each bind FAD; these read LVVGNTEI and SIGGN. Cys-534 and Cys-991 form a disulfide bridge. 2 residues coordinate Mo-molybdopterin: Gln-766 and Phe-797. The substrate site is built by Glu-801 and Arg-879. Residue Arg-911 coordinates Mo-molybdopterin. Residues Phe-913 and Thr-1009 each coordinate substrate. A Mo-molybdopterin-binding site is contributed by Ala-1078. Glu-1260 serves as the catalytic Proton acceptor.

The protein belongs to the xanthine dehydrogenase family. In terms of assembly, homodimer. Interacts with BTN1A1. FAD is required as a cofactor. The cofactor is Mo-molybdopterin. [2Fe-2S] cluster serves as cofactor. In terms of processing, subject to partial proteolysis; this alters the enzyme from the dehydrogenase form (D) to the oxidase form (O). Post-translationally, contains sulfhydryl groups that are easily oxidized (in vitro); this alters the enzyme from the dehydrogenase form (D) to the oxidase form (O).

The protein localises to the cytoplasm. The protein resides in the peroxisome. It is found in the secreted. It catalyses the reaction xanthine + NAD(+) + H2O = urate + NADH + H(+). The enzyme catalyses hypoxanthine + NAD(+) + H2O = xanthine + NADH + H(+). The catalysed reaction is xanthine + O2 + H2O = urate + H2O2. With respect to regulation, can be converted from the dehydrogenase form (D) to the oxidase form (O) irreversibly by proteolysis or reversibly through the oxidation of sulfhydryl groups. Key enzyme in purine degradation. Catalyzes the oxidation of hypoxanthine to xanthine. Catalyzes the oxidation of xanthine to uric acid. Contributes to the generation of reactive oxygen species. The protein is Xanthine dehydrogenase/oxidase (XDH) of Felis catus (Cat).